A 568-amino-acid polypeptide reads, in one-letter code: Glycine--tRNA ligase (568 aa).

The substrate site is built by R97 and E163. ATP contacts are provided by residues 195 to 197 (RNE), 205 to 210 (IRLREF), 322 to 323 (EC), and 441 to 444 (GIDR). 210–214 (FTQAE) is a substrate binding site. 437–441 (EPSFG) contributes to the substrate binding site.

Belongs to the class-II aminoacyl-tRNA synthetase family.

Its subcellular location is the cytoplasm. The enzyme catalyses tRNA(Gly) + glycine + ATP = glycyl-tRNA(Gly) + AMP + diphosphate. Its function is as follows. Catalyzes the attachment of glycine to tRNA(Gly). In Pyrococcus furiosus (strain ATCC 43587 / DSM 3638 / JCM 8422 / Vc1), this protein is Glycine--tRNA ligase.